A 445-amino-acid chain; its full sequence is MIELYDSYSQESRDLHESLGATGLSQLGVVIDADGFLPDGLLSPFTYYLGYEDGKPLYFNQVPVSDFWEILGDNQSACIEDVTQERAVIHYADGMQARLVKQVDWKDLEGRVRQVDHYNRFGACFATTTYSADSEPIMTVYQDVNGQQVLLENHVTGDILLTLPGQSMRYFANKVEFITFFLQDLEIDTSQLIFNTLATPFLVSFHHPDKSGSDVLVWQEPLYDAIPGNMQLILESDNVRTKKIIIPNKATYERALELTDEKYHDQFVHLGYHYQFKRDNFLRRDALILTNSDQIEQVEAIAGALPDVTFRIAAVTEMSSKLLDMLCYPNVALYQNASPQKIQELYQLSDIYLDINHSNELLQAVRQAFEHNLLILGFNQTVHNRLYIAPDHLFESSEVAALVETIKLALSDVDQMRQALGKQGQHANYVDLVRYQETMQTVLGG.

Positions 55–171 are glycosyltransferase 1; the sequence is KPLYFNQVPV…TLPGQSMRYF (117 aa).

This sequence belongs to the GtfB family. In terms of assembly, interacts with glycosyltransferase GtfA; probably forms a heterotetramer with 2 subunits each of GtfA and GtfB. Part of the accessory SecA2/SecY2 protein translocation apparatus.

It is found in the cell membrane. It functions in the pathway protein modification; protein glycosylation. Required for the polymorphic O-glycosylation of the serine-rich repeat protein PsrP. A stabilizing protein that is part of the accessory SecA2/SecY2 system specifically required to export serine-rich repeat cell wall proteins encoded upstream in the same operon. The GtfA-GtfB complex adds GlcNAc from UDP-GlcNAc to PsrP, attaching the first sugar residue. Stabilizes the glycosylation activity of GtfA. Has no N-acetylglucosaminyl transferase activity on its own. This chain is UDP-N-acetylglucosamine--peptide N-acetylglucosaminyltransferase stabilizing protein GtfB, found in Streptococcus pneumoniae serotype 4 (strain ATCC BAA-334 / TIGR4).